Here is a 227-residue protein sequence, read N- to C-terminus: Cytochrome c oxidase subunit 2 (227 aa).

The Mitochondrial intermembrane segment spans residues methionine 1 to serine 14. The chain crosses the membrane as a helical span at residues proline 15–methionine 45. The Mitochondrial matrix segment spans residues leucine 46 to glutamine 59. The chain crosses the membrane as a helical span at residues glutamate 60–methionine 87. Residues aspartate 88–valine 227 are Mitochondrial intermembrane-facing. Residues histidine 161, cysteine 196, glutamate 198, cysteine 200, histidine 204, and methionine 207 each contribute to the Cu cation site. A Mg(2+)-binding site is contributed by glutamate 198.

It belongs to the cytochrome c oxidase subunit 2 family. In terms of assembly, component of the cytochrome c oxidase (complex IV, CIV), a multisubunit enzyme composed of 14 subunits. The complex is composed of a catalytic core of 3 subunits MT-CO1, MT-CO2 and MT-CO3, encoded in the mitochondrial DNA, and 11 supernumerary subunits COX4I, COX5A, COX5B, COX6A, COX6B, COX6C, COX7A, COX7B, COX7C, COX8 and NDUFA4, which are encoded in the nuclear genome. The complex exists as a monomer or a dimer and forms supercomplexes (SCs) in the inner mitochondrial membrane with NADH-ubiquinone oxidoreductase (complex I, CI) and ubiquinol-cytochrome c oxidoreductase (cytochrome b-c1 complex, complex III, CIII), resulting in different assemblies (supercomplex SCI(1)III(2)IV(1) and megacomplex MCI(2)III(2)IV(2)). Found in a complex with TMEM177, COA6, COX18, COX20, SCO1 and SCO2. Interacts with TMEM177 in a COX20-dependent manner. Interacts with COX20. Interacts with COX16. Cu cation is required as a cofactor.

It is found in the mitochondrion inner membrane. It catalyses the reaction 4 Fe(II)-[cytochrome c] + O2 + 8 H(+)(in) = 4 Fe(III)-[cytochrome c] + 2 H2O + 4 H(+)(out). Functionally, component of the cytochrome c oxidase, the last enzyme in the mitochondrial electron transport chain which drives oxidative phosphorylation. The respiratory chain contains 3 multisubunit complexes succinate dehydrogenase (complex II, CII), ubiquinol-cytochrome c oxidoreductase (cytochrome b-c1 complex, complex III, CIII) and cytochrome c oxidase (complex IV, CIV), that cooperate to transfer electrons derived from NADH and succinate to molecular oxygen, creating an electrochemical gradient over the inner membrane that drives transmembrane transport and the ATP synthase. Cytochrome c oxidase is the component of the respiratory chain that catalyzes the reduction of oxygen to water. Electrons originating from reduced cytochrome c in the intermembrane space (IMS) are transferred via the dinuclear copper A center (CU(A)) of subunit 2 and heme A of subunit 1 to the active site in subunit 1, a binuclear center (BNC) formed by heme A3 and copper B (CU(B)). The BNC reduces molecular oxygen to 2 water molecules using 4 electrons from cytochrome c in the IMS and 4 protons from the mitochondrial matrix. The protein is Cytochrome c oxidase subunit 2 (MT-CO2) of Uromys caudimaculatus (Giant white-tailed rat).